Reading from the N-terminus, the 754-residue chain is Endothelin-converting enzyme 1 (754 aa).

Residues 1–52 (MMSTYKRATLDEEDLVDSLSEGEVYPNGLQVNFRNFRSSQRCWATRTQVEKR) are Cytoplasmic-facing. Position 9 is a phosphothreonine (Thr-9). A helical; Signal-anchor for type II membrane protein transmembrane segment spans residues 53–73 (LIVLVALLAAGLVACLTALGI). The Extracellular portion of the chain corresponds to 74-754 (QYRTRTPPVC…MNPRHKCEVW (681 aa)). The Peptidase M13 domain maps to 82 to 754 (VCLSEACVSV…MNPRHKCEVW (673 aa)). Disulfide bonds link Cys-83–Cys-88, Cys-106–Cys-739, Cys-114–Cys-699, Cys-169–Cys-419, and Cys-628–Cys-751. Residues Asn-150, Asn-171, Asn-194, Asn-254, Asn-300, Asn-346, Asn-367, and Asn-523 are each glycosylated (N-linked (GlcNAc...) asparagine). Zn(2+) is bound at residue His-591. Glu-592 is a catalytic residue. His-595 provides a ligand contact to Zn(2+). N-linked (GlcNAc...) asparagine glycosylation is found at Asn-616 and Asn-635. Glu-651 contacts Zn(2+). Asp-655 (proton donor) is an active-site residue.

Belongs to the peptidase M13 family. Homodimer; disulfide-linked. Interacts with PPP1R16B. Interacts with TSPAN8; this interaction recruits the endothelin converting enzyme ECE1 to tetraspanin-enriched microdomains and positively modulates its enzymatic activity. Zn(2+) serves as cofactor.

The protein resides in the cell membrane. The catalysed reaction is Hydrolysis of the 21-Trp-|-Val-22 bond in big endothelin to form endothelin 1.. Its activity is regulated as follows. Inhibited by phosphoramidon. Converts big endothelin-1 to endothelin-1. This Cavia porcellus (Guinea pig) protein is Endothelin-converting enzyme 1 (ECE1).